We begin with the raw amino-acid sequence, 349 residues long: Alanine racemase (349 aa).

Lysine 35 serves as the catalytic Proton acceptor; specific for D-alanine. The residue at position 35 (lysine 35) is an N6-(pyridoxal phosphate)lysine. Substrate is bound at residue arginine 130. The active-site Proton acceptor; specific for L-alanine is tyrosine 244. Methionine 292 lines the substrate pocket.

This sequence belongs to the alanine racemase family. Requires pyridoxal 5'-phosphate as cofactor.

The catalysed reaction is L-alanine = D-alanine. It functions in the pathway amino-acid biosynthesis; D-alanine biosynthesis; D-alanine from L-alanine: step 1/1. In terms of biological role, catalyzes the interconversion of L-alanine and D-alanine. May also act on other amino acids. This chain is Alanine racemase (alr), found in Cereibacter sphaeroides (strain KD131 / KCTC 12085) (Rhodobacter sphaeroides).